A 1238-amino-acid chain; its full sequence is Anion exchange protein 2 (1238 aa).

The segment at 1–238 (MSGTPRRPAS…YNLQERRRIG (238 aa)) is disordered. At 1–704 (MSGTPRRPAS…SDFRDALDPQ (704 aa)) the chain is on the cytoplasmic side. Composition is skewed to basic and acidic residues over residues 37-49 (DLHRTLGVERFEE) and 58-75 (GGEELGRSYGEEDFEYHR). Composition is skewed to basic residues over residues 76 to 85 (QSSHHIHHPL) and 94 to 110 (RRRKTPQGQVRKPRRRP). Acidic residues predominate over residues 120 to 133 (TIEEGEEDEDETSE). Residues Ser-132, Ser-144, Ser-170, and Ser-172 each carry the phosphoserine modification. Polar residues predominate over residues 141–154 (TDPSPASTPTSVQF). Gly residues predominate over residues 205–215 (GTAGGDDGGAS). The residue at position 239 (Ser-239) is a Phosphoserine. Thr-253 is subject to Phosphothreonine. Lys-270 is subject to N6-methyllysine. Residues 277–315 (VPGVRRHLVRKNAKGSSQSSREGREPGPTPRTRPRAPHK) form a disordered region. The segment covering 280 to 289 (VRRHLVRKNA) has biased composition (basic residues). Ser-439 bears the Phosphoserine mark. Residues 445–466 (SLLGHHHTQGAESDPHVTEPLI) form a disordered region. Transmembrane regions (helical) follow at residues 705-728 (CLAAVIFIYFAALSPAITFGGLLG), 734-771 (LIGVSELIMSTALQGVTFCLLGAQPLLVIGFSGPLLVF), 791-813 (VWIGFWLVLSALLMVALEGSFLV), and 823-844 (IFAFLISLIFIYETFYKLVKIF). A membrane (anion exchange) region spans residues 705–1238 (CLAAVIFIYF…DEYNEMPMPV (534 aa)). The Extracellular portion of the chain corresponds to 845-897 (QEHPLHGCLASNSSEADGGKNTTWTEAAPTPGHGNTSSAEQAGVERPQGQPNT). N-linked (GlcNAc...) asparagine glycosylation is found at Asn-856, Asn-865, and Asn-879. Polar residues predominate over residues 858 to 869 (SEADGGKNTTWT). The tract at residues 858–892 (SEADGGKNTTWTEAAPTPGHGNTSSAEQAGVERPQ) is disordered. The chain crosses the membrane as a helical span at residues 898–915 (ALLSLVLMAGTFFIAFFL). Topologically, residues 916–930 (RKFKNSRFFPGRIRR) are cytoplasmic. 5 helical membrane-spanning segments follow: residues 931 to 951 (VIGDFGVPIAILIMVLVDYSI), 985 to 1007 (PFPVWMMVASLLPAILVFILIFM), 1033 to 1054 (LLLIVAMGGICALFGLLWLAAA), 1088 to 1133 (VTGL…IQFY), and 1160 to 1196 (MHLFKALQLLCLALLWAVMSTAASLAFPFILILTVPL). Residue Cys-1170 is the site of S-palmitoyl cysteine attachment.

The protein belongs to the anion exchanger (TC 2.A.31) family. Expressed in the cochlea (at protein level).

The protein localises to the apical cell membrane. The protein resides in the basolateral cell membrane. The enzyme catalyses hydrogencarbonate(in) + chloride(out) = hydrogencarbonate(out) + chloride(in). Functionally, sodium-independent anion exchanger which mediates the electroneutral exchange of chloride for bicarbonate ions across the cell membrane. Plays an important role in osteoclast differentiation and function. Regulates bone resorption and calpain-dependent actin cytoskeleton organization in osteoclasts via anion exchange-dependent control of pH. Essential for intracellular pH regulation in CD8(+) T-cells upon CD3 stimulation, modulating CD8(+) T-cell response. This is Anion exchange protein 2 (SLC4A2) from Cavia porcellus (Guinea pig).